A 238-amino-acid polypeptide reads, in one-letter code: Probable transcriptional regulatory protein SZO_02930 (238 aa).

This sequence belongs to the TACO1 family. YeeN subfamily.

Its subcellular location is the cytoplasm. The polypeptide is Probable transcriptional regulatory protein SZO_02930 (Streptococcus equi subsp. zooepidemicus (strain H70)).